A 386-amino-acid polypeptide reads, in one-letter code: Succinate--CoA ligase [ADP-forming] subunit beta (386 aa).

The region spanning K9–E244 is the ATP-grasp domain. ATP-binding positions include K46, G53–G55, E99, C102, and E107. Residues N199 and D213 each contribute to the Mg(2+) site. Residues N264 and G321–M323 each bind substrate.

Belongs to the succinate/malate CoA ligase beta subunit family. Heterotetramer of two alpha and two beta subunits. The cofactor is Mg(2+).

The catalysed reaction is succinate + ATP + CoA = succinyl-CoA + ADP + phosphate. The enzyme catalyses GTP + succinate + CoA = succinyl-CoA + GDP + phosphate. It participates in carbohydrate metabolism; tricarboxylic acid cycle; succinate from succinyl-CoA (ligase route): step 1/1. Its function is as follows. Succinyl-CoA synthetase functions in the citric acid cycle (TCA), coupling the hydrolysis of succinyl-CoA to the synthesis of either ATP or GTP and thus represents the only step of substrate-level phosphorylation in the TCA. The beta subunit provides nucleotide specificity of the enzyme and binds the substrate succinate, while the binding sites for coenzyme A and phosphate are found in the alpha subunit. This is Succinate--CoA ligase [ADP-forming] subunit beta from Bacillus cytotoxicus (strain DSM 22905 / CIP 110041 / 391-98 / NVH 391-98).